Here is a 148-residue protein sequence, read N- to C-terminus: Large-conductance mechanosensitive channel (148 aa).

The next 2 helical transmembrane spans lie at 9–29 and 79–99; these read AFAVKGNVVDMAVGIIIGAAF and IQTVIDFIIVAFAIFMGVKAI.

The protein belongs to the MscL family. In terms of assembly, homopentamer.

The protein resides in the cell inner membrane. Functionally, channel that opens in response to stretch forces in the membrane lipid bilayer. May participate in the regulation of osmotic pressure changes within the cell. This chain is Large-conductance mechanosensitive channel, found in Pseudomonas syringae pv. syringae (strain B728a).